The primary structure comprises 356 residues: Guanine nucleotide-binding protein alpha-2 subunit (356 aa).

The N-myristoyl glycine moiety is linked to residue G2. C4 carries the S-palmitoyl cysteine lipid modification. One can recognise a G-alpha domain in the interval 35 to 356 (REVKLLLLGA…LTNNLRDIVL (322 aa)). Positions 38-51 (KLLLLGAGESGKST) are G1 motif. 14 residues coordinate GTP: E46, S47, G48, K49, S50, T51, D153, L178, T184, G206, N272, K273, D275, and A329. Position 50 (S50) interacts with Mg(2+). The segment at 176–184 (DILRCRNKT) is G2 motif. T184 is a Mg(2+) binding site. The interval 199 to 208 (YRIFDVGGQR) is G3 motif. A G4 motif region spans residues 268–275 (ILFLNKVD). A G5 motif region spans residues 327 to 332 (TNATDV).

This sequence belongs to the G-alpha family. As to quaternary structure, g proteins are composed of 3 units; alpha, beta and gamma. The alpha chain contains the guanine nucleotide binding site. Mg(2+) serves as cofactor.

Functionally, guanine nucleotide-binding proteins (G proteins) are involved as modulators or transducers in various transmembrane signaling systems. In Mycosarcoma maydis (Corn smut fungus), this protein is Guanine nucleotide-binding protein alpha-2 subunit (GPA2).